We begin with the raw amino-acid sequence, 191 residues long: 7-methyl-GTP pyrophosphatase (191 aa).

Asp-70 serves as the catalytic Proton acceptor.

This sequence belongs to the Maf family. YceF subfamily. A divalent metal cation serves as cofactor.

It is found in the cytoplasm. It carries out the reaction N(7)-methyl-GTP + H2O = N(7)-methyl-GMP + diphosphate + H(+). Functionally, nucleoside triphosphate pyrophosphatase that hydrolyzes 7-methyl-GTP (m(7)GTP). May have a dual role in cell division arrest and in preventing the incorporation of modified nucleotides into cellular nucleic acids. In Xanthomonas oryzae pv. oryzae (strain KACC10331 / KXO85), this protein is 7-methyl-GTP pyrophosphatase.